Consider the following 140-residue polypeptide: FLYWCH family member 2 (140 aa).

Disordered regions lie at residues 1 to 39 and 83 to 140; these read MPLP…PREF and THPE…GKSL. S21 carries the phosphoserine modification. Basic and acidic residues predominate over residues 98-114; the sequence is PEQKRSRQDPGADRTED. Residues 118 to 127 are compositionally biased toward low complexity; that stretch reads AAGPPEAAGE.

In Pongo abelii (Sumatran orangutan), this protein is FLYWCH family member 2 (FLYWCH2).